The primary structure comprises 606 residues: MQKSLLAIAMASLLTPVSYLHAQEVQTNDTVVVTANRFEQPLAEVIASTTVISKQEIEETQAKSLLDVLKRVPGIEVSQSGGRGHSASVFIRGFNSNQVLFLVDGVRINSAAGGISFNHIPVGIIERVEVIKGPGGALYGSDAIAGVINVITTSSESSEGSVVSLGAGSDAQKEANFSTTRAFANGGVLKLAGGFEETEGFDIKDPETGLNYGYESQNLFASYSQAFNDEFSGSASVRWYDSLTEYDSGGKNYGYSENLSITADVQYSGSRLSSTLRANQQAIENLDYSQAEGKDNAGTVKKIALTNLQFLNQYLISEGITIGAGADWRKEKLDDDALSYGYPDKLAGESRSTTGVYLSTDLQLGDLQVTGSVRNDKHDTYDNYRTWSLGTRYQITESHSVRATFGTSFKAPSYSDLTNNPDLKPEEAMSREIGYTGEFALFTVDVAAYDNDVDNLIIWYEGSPWWYPENVDATLKGLEITGYFNTWFVHHTVVAEFKDHQDSGGNKLAKRADENYKWLMDASYENFDVNLTYTYTGERLGNPKEVSDPKNELPSVSLWDASVGYWISPDLVVRARVDNLTNEKYQTTLSYNAPERRYFANLTYQF.

The N-terminal stretch at 1 to 22 (MQKSLLAIAMASLLTPVSYLHA) is a signal peptide. Positions 29–36 (DTVVVTAN) match the TonB box motif. Residues 41-153 (PLAEVIASTT…IAGVINVITT (113 aa)) form the TBDR plug domain. A TBDR beta-barrel domain is found at 158 to 606 (SEGSVVSLGA…RYFANLTYQF (449 aa)). The TonB C-terminal box signature appears at 589–606 (LSYNAPERRYFANLTYQF).

This sequence belongs to the TonB-dependent receptor family. BtuB (TC 1.B.14.3.1) subfamily.

It localises to the cell outer membrane. Functionally, involved in the active translocation of vitamin B12 (cyanocobalamin) across the outer membrane to the periplasmic space. It derives its energy for transport by interacting with the trans-periplasmic membrane protein TonB. The protein is Vitamin B12 transporter BtuB of Vibrio vulnificus (strain CMCP6).